Reading from the N-terminus, the 584-residue chain is Arginine--tRNA ligase (584 aa).

A 'HIGH' region motif is present at residues proline 126–histidine 136.

It belongs to the class-I aminoacyl-tRNA synthetase family. As to quaternary structure, monomer.

The protein localises to the cytoplasm. It catalyses the reaction tRNA(Arg) + L-arginine + ATP = L-arginyl-tRNA(Arg) + AMP + diphosphate. The polypeptide is Arginine--tRNA ligase (Synechococcus sp. (strain ATCC 27144 / PCC 6301 / SAUG 1402/1) (Anacystis nidulans)).